The primary structure comprises 609 residues: X-ray repair cross-complementing protein 6 (609 aa).

The segment at 1 to 28 is disordered; that stretch reads MSGWESYYKTEGDEEAEEEQEENLEASG. An N-acetylserine modification is found at Ser-2. Ser-2 is modified (phosphoserine). The residue at position 6 (Ser-6) is a Phosphoserine; by PRKDC. Residues 12–24 show a composition bias toward acidic residues; that stretch reads GDEEAEEEQEENL. Phosphoserine is present on Ser-27. Residue Lys-31 is the Schiff-base intermediate with DNA; for 5'-deoxyribose-5-phosphate lyase activity of the active site. An N6-acetyllysine modification is found at Lys-31. A Phosphoserine; by PRKDC modification is found at Ser-51. Residues 261–468 enclose the Ku domain; the sequence is LKLNKDIVIS…VGKMKAIVEK (208 aa). Residues 277 to 341 form a DNA-binding region; the sequence is VQKALKPPPI…EETEELKRFD (65 aa). A Glycyl lysine isopeptide (Lys-Gly) (interchain with G-Cter in SUMO2) cross-link involves residue Lys-287. A Phosphoserine modification is found at Ser-306. N6-acetyllysine occurs at positions 317, 331, and 338. Lys-317 is covalently cross-linked (Glycyl lysine isopeptide (Lys-Gly) (interchain with G-Cter in SUMO2)). An interaction with XRCC5 region spans residues 373 to 482; that stretch reads SLVIGSSTLF…YRSDSFENPV (110 aa). Thr-455 bears the Phosphothreonine mark. An N6-acetyllysine modification is found at Lys-461. Residues Ser-477 and Ser-520 each carry the phosphoserine modification. The interval 536–562 is disordered; it reads PEGKVTKRKHDNEGSGSKRPKVEYSEE. N6-acetyllysine is present on residues Lys-539, Lys-542, and Lys-544. Ser-550 bears the Phosphoserine mark. Residues 550-609 form an interaction with DEAF1 region; the sequence is SGSKRPKVEYSEEELKTHISKGTLGKFTVPMLKEACRAYGLKSGLKKQELLEALTKHFQD. Lys-553 and Lys-556 each carry N6-acetyllysine. A Glycyl lysine isopeptide (Lys-Gly) (interchain with G-Cter in SUMO2) cross-link involves residue Lys-556. Ser-560 is modified (phosphoserine). Lys-570 is modified (N6,N6,N6-trimethyllysine). Residues 573–607 enclose the SAP domain; that stretch reads LGKFTVPMLKEACRAYGLKSGLKKQELLEALTKHF. The segment at 578 to 583 is interaction with BAX; it reads VPMLKE.

It belongs to the ku70 family. In terms of assembly, forms a heterodimer with XRCC5/Ku80; heterodimerization stabilizes XRCC5 protein. Component of the core long-range non-homologous end joining (NHEJ) complex (also named DNA-PK complex) composed of PRKDC, LIG4, XRCC4, XRCC6/Ku70, XRCC5/Ku86 and NHEJ1/XLF. Additional component of the NHEJ complex includes PAXX. Following autophosphorylation, PRKDC dissociates from DNA, leading to formation of the short-range NHEJ complex, composed of LIG4, XRCC4, XRCC6/Ku70, XRCC5/Ku86 and NHEJ1/XLF. The XRCC5-XRCC6 dimer also associates with NAA15, and this complex binds to the osteocalcin promoter and activates osteocalcin expression. In addition, XRCC6 interacts with the osteoblast-specific transcription factors MSX2, RUNX2 and DLX5. Interacts with ELF3. Interacts with ATP23. The XRCC5-XRRC6 dimer associates in a DNA-dependent manner with APEX1. Binds to CDK9 isoform 2. Identified in a complex with DEAF1 and XRCC5. Interacts with DEAF1 (via the SAND domain); the interaction is direct and may be inhibited by DNA-binding. Interacts with CLU. Interacts with NR4A3; the DNA-dependent protein kinase complex DNA-PK phosphorylates and activates NR4A3 and prevents NR4A3 ubiquitinylation and degradation. Interacts with CYREN isoform 1 (CYREN-1) and isoform 4 (CYREN-2) (via KBM motif). Interacts (via N-terminus) with HSF1 (via N-terminus); this interaction is direct and prevents XRCC5/XRCC6 heterodimeric binding and non-homologous end joining (NHEJ) repair activities induced by ionizing radiation (IR). Part of the HDP-RNP complex composed of at least HEXIM1, PRKDC, XRCC5, XRCC6, paraspeckle proteins (SFPQ, NONO, PSPC1, RBM14, and MATR3) and NEAT1 RNA. Interacts with HMBOX1. Interacts with ATF7. Interacts with APLF (via KBM motif). Interacts with WRN (via KBM motif). The XRCC5-XRCC6 dimer associates with ALKBH2. Interacts with TPRN; TPRN interacts with a number of DNA damage response proteins, is recruited to sites of DNA damage and may play a role in DNA damage repair. When not acetylated, interacts with BAX. Interacts with ERCC6L2. As to quaternary structure, (Microbial infection) Interacts with human T-cell leukemia virus 1/HTLV-1 protein HBZ. In terms of processing, phosphorylation by PRKDC may enhance helicase activity. Phosphorylation of Ser-51 does not affect DNA repair. ADP-ribosylated by PARP3. Post-translationally, methylation by SETD4 leads to accumulation in the cytoplasm and is a prerequisite for acetylation, possibly due to the change of subcellular from the nucleus to the cytosol initiated by methylation, acetylation occurring in the cytosol. In terms of processing, acetylation can be catalyzed in vitro by CREBBP/CBP and KAT2B/PCAF.

The protein resides in the nucleus. It localises to the chromosome. Its subcellular location is the cytoplasm. Single-stranded DNA-dependent ATP-dependent helicase that plays a key role in DNA non-homologous end joining (NHEJ) by recruiting DNA-PK to DNA. Required for double-strand break repair and V(D)J recombination. Also has a role in chromosome translocation. Has a role in chromosome translocation. The DNA helicase II complex binds preferentially to fork-like ends of double-stranded DNA in a cell cycle-dependent manner. It works in the 3'-5' direction. During NHEJ, the XRCC5-XRRC6 dimer performs the recognition step: it recognizes and binds to the broken ends of the DNA and protects them from further resection. Binding to DNA may be mediated by XRCC6. The XRCC5-XRRC6 dimer acts as a regulatory subunit of the DNA-dependent protein kinase complex DNA-PK by increasing the affinity of the catalytic subunit PRKDC to DNA by 100-fold. The XRCC5-XRRC6 dimer is probably involved in stabilizing broken DNA ends and bringing them together. The assembly of the DNA-PK complex to DNA ends is required for the NHEJ ligation step. Probably also acts as a 5'-deoxyribose-5-phosphate lyase (5'-dRP lyase), by catalyzing the beta-elimination of the 5' deoxyribose-5-phosphate at an abasic site near double-strand breaks. 5'-dRP lyase activity allows to 'clean' the termini of abasic sites, a class of nucleotide damage commonly associated with strand breaks, before such broken ends can be joined. The XRCC5-XRRC6 dimer together with APEX1 acts as a negative regulator of transcription. In association with NAA15, the XRCC5-XRRC6 dimer binds to the osteocalcin promoter and activates osteocalcin expression. Plays a role in the regulation of DNA virus-mediated innate immune response by assembling into the HDP-RNP complex, a complex that serves as a platform for IRF3 phosphorylation and subsequent innate immune response activation through the cGAS-STING pathway. Negatively regulates apoptosis by interacting with BAX and sequestering it from the mitochondria. Might have deubiquitination activity, acting on BAX. This is X-ray repair cross-complementing protein 6 (XRCC6) from Homo sapiens (Human).